We begin with the raw amino-acid sequence, 122 residues long: Ribosome-binding factor A (122 aa).

This sequence belongs to the RbfA family. As to quaternary structure, monomer. Binds 30S ribosomal subunits, but not 50S ribosomal subunits or 70S ribosomes.

It is found in the cytoplasm. Its function is as follows. One of several proteins that assist in the late maturation steps of the functional core of the 30S ribosomal subunit. Associates with free 30S ribosomal subunits (but not with 30S subunits that are part of 70S ribosomes or polysomes). Required for efficient processing of 16S rRNA. May interact with the 5'-terminal helix region of 16S rRNA. The chain is Ribosome-binding factor A from Syntrophomonas wolfei subsp. wolfei (strain DSM 2245B / Goettingen).